A 153-amino-acid chain; its full sequence is MVFEGHLVGTGLKVGVVVGRFNEFITSKLLGGALDGLKRHGVEENDIDVAWVPGAFEIPLIAKKMANSGKYDAVITLGTVIRGATTHYDYVCNEVAKGVASLSLQTDIPVIFGVLTTETIEQAIERAGTKAGNKGYESAVAAIEMAHLSKHWA.

5-amino-6-(D-ribitylamino)uracil contacts are provided by residues Phe-21, 55–57 (AFE), and 79–81 (TVI). Position 84–85 (84–85 (AT)) interacts with (2S)-2-hydroxy-3-oxobutyl phosphate. His-87 acts as the Proton donor in catalysis. Residue Phe-112 participates in 5-amino-6-(D-ribitylamino)uracil binding. Arg-126 provides a ligand contact to (2S)-2-hydroxy-3-oxobutyl phosphate.

It belongs to the DMRL synthase family. Forms an icosahedral capsid composed of 60 subunits, arranged as a dodecamer of pentamers.

The catalysed reaction is (2S)-2-hydroxy-3-oxobutyl phosphate + 5-amino-6-(D-ribitylamino)uracil = 6,7-dimethyl-8-(1-D-ribityl)lumazine + phosphate + 2 H2O + H(+). It participates in cofactor biosynthesis; riboflavin biosynthesis; riboflavin from 2-hydroxy-3-oxobutyl phosphate and 5-amino-6-(D-ribitylamino)uracil: step 1/2. In terms of biological role, catalyzes the formation of 6,7-dimethyl-8-ribityllumazine by condensation of 5-amino-6-(D-ribitylamino)uracil with 3,4-dihydroxy-2-butanone 4-phosphate. This is the penultimate step in the biosynthesis of riboflavin. The polypeptide is 6,7-dimethyl-8-ribityllumazine synthase (Bacillus anthracis (strain A0248)).